The following is a 393-amino-acid chain: NADH-quinone oxidoreductase subunit D (393 aa).

Belongs to the complex I 49 kDa subunit family. NDH-1 is composed of 14 different subunits. Subunits NuoB, C, D, E, F, and G constitute the peripheral sector of the complex.

Its subcellular location is the cell inner membrane. It catalyses the reaction a quinone + NADH + 5 H(+)(in) = a quinol + NAD(+) + 4 H(+)(out). In terms of biological role, NDH-1 shuttles electrons from NADH, via FMN and iron-sulfur (Fe-S) centers, to quinones in the respiratory chain. The immediate electron acceptor for the enzyme in this species is believed to be ubiquinone. Couples the redox reaction to proton translocation (for every two electrons transferred, four hydrogen ions are translocated across the cytoplasmic membrane), and thus conserves the redox energy in a proton gradient. In Ehrlichia ruminantium (strain Gardel), this protein is NADH-quinone oxidoreductase subunit D.